Consider the following 435-residue polypeptide: Antho-RFamide neuropeptides type 1 (435 aa).

The first 22 residues, 1 to 22 (MTTVSYVTILLTVLVQVLTSDA), serve as a signal peptide directing secretion. The propeptide occupies 23 to 193 (KATNNKRELS…SVPGRYGREL (171 aa)). Position 194 is a pyrrolidone carboxylic acid (Gln194). Position 197 is a phenylalanine amide (Phe197). A propeptide spanning residues 199–201 (REL) is cleaved from the precursor. The residue at position 205 (Phe205) is a Phenylalanine amide. A propeptide spanning residues 207 to 209 (REA) is cleaved from the precursor. Phe213 is modified (phenylalanine amide). Positions 215–217 (REL) are excised as a propeptide. Phe221 bears the Phenylalanine amide mark. A propeptide spanning residues 223 to 225 (REF) is cleaved from the precursor. Phe229 is modified (phenylalanine amide). Residues 230–371 (GREDQGRFGR…EDIAEADQGR (142 aa)) show a composition bias toward basic and acidic residues. 2 disordered regions span residues 230–374 (GRED…RFGR) and 386–435 (AKKR…AKTS). Residues 231 to 233 (RED) constitute a propeptide that is removed on maturation. The residue at position 237 (Phe237) is a Phenylalanine amide. The propeptide occupies 239–241 (RED). Phe245 carries the post-translational modification Phenylalanine amide. Positions 247–249 (RED) are excised as a propeptide. Phe253 bears the Phenylalanine amide mark. A propeptide spanning residues 255 to 257 (RED) is cleaved from the precursor. A Phenylalanine amide modification is found at Phe261. Residues 263–265 (RED) constitute a propeptide that is removed on maturation. Phe269 bears the Phenylalanine amide mark. The propeptide occupies 271 to 273 (RED). Phe277 bears the Phenylalanine amide mark. Residues 279-281 (REL) constitute a propeptide that is removed on maturation. A Phenylalanine amide modification is found at Phe285. Positions 287-289 (REF) are excised as a propeptide. Phe293 carries the post-translational modification Phenylalanine amide. Positions 295 to 297 (RED) are excised as a propeptide. The residue at position 301 (Phe301) is a Phenylalanine amide. The propeptide occupies 303-305 (RED). Phe309 carries the post-translational modification Phenylalanine amide. The propeptide occupies 311–313 (REL). Phe317 carries the phenylalanine amide modification. Residues 319–321 (RED) constitute a propeptide that is removed on maturation. A Phenylalanine amide modification is found at Phe325. The propeptide occupies 327–329 (RED). At Phe333 the chain carries Phenylalanine amide. The propeptide occupies 335–342 (REDLAKED). Phenylalanine amide is present on Phe346. Positions 348–355 (REDLAKED) are excised as a propeptide. At Phe359 the chain carries Phenylalanine amide. Positions 361–368 (REDIAEAD) are excised as a propeptide. Phe372 bears the Phenylalanine amide mark. Residues 374-435 (RNAAAAAAAA…KSDDALAKTS (62 aa)) constitute a propeptide that is removed on maturation. Residues 398-435 (SDPKPQTRFRDGKDMQEKRKVEKKDKIEKSDDALAKTS) show a composition bias toward basic and acidic residues.

Belongs to the FARP (FMRFamide related peptide) family.

It is found in the secreted. Its function is as follows. Not known but it could act as a transmitter at neuromuscular synapses. This chain is Antho-RFamide neuropeptides type 1, found in Anthopleura elegantissima (Green aggregating anemone).